Reading from the N-terminus, the 288-residue chain is Oxaloacetate decarboxylase (288 aa).

Residue Ser-47 coordinates substrate. Residue Asp-85 participates in Mg(2+) binding. Substrate is bound by residues Arg-156 and His-232.

This sequence belongs to the isocitrate lyase/PEP mutase superfamily. Oxaloacetate decarboxylase family. Homotetramer; dimer of dimers. Requires Mg(2+) as cofactor.

The catalysed reaction is oxaloacetate + H(+) = pyruvate + CO2. Functionally, catalyzes the decarboxylation of oxaloacetate into pyruvate. Seems to play a role in maintaining cellular concentrations of bicarbonate and pyruvate. The chain is Oxaloacetate decarboxylase from Bradyrhizobium diazoefficiens (strain JCM 10833 / BCRC 13528 / IAM 13628 / NBRC 14792 / USDA 110).